Here is a 769-residue protein sequence, read N- to C-terminus: Subtilisin-like protease 3 (769 aa).

6 N-linked (GlcNAc...) asparagine glycosylation sites follow: N68, N102, N108, N295, N316, and N356. The segment covering 293–302 has biased composition (basic residues); it reads KINHSNKHKN. Positions 293 to 329 are disordered; it reads KINHSNKHKNNNNNNNNNDYHNNNKSNYHSHSSAKCQ. The segment covering 303–325 has biased composition (low complexity); the sequence is NNNNNNNNDYHNNNKSNYHSHSS. Residues 345–756 form the Peptidase S8 domain; it reads GYDIIQMEEG…GGFINVYDLV (412 aa). D372 serves as the catalytic Charge relay system. The segment at 468-493 is disordered; it reads NIKSSDNIKSSDNINSSDNIKSSDNN. N-linked (GlcNAc...) asparagine glycosylation is found at N482 and N515. The active-site Charge relay system is the H523. N-linked (GlcNAc...) asparagine glycosylation is found at N584 and N616. S701 serves as the catalytic Charge relay system. The N-linked (GlcNAc...) asparagine glycan is linked to N720.

Belongs to the peptidase S8 family.

It localises to the secreted. The enzyme catalyses Hydrolysis of proteins with broad specificity for peptide bonds, and a preference for a large uncharged residue in P1. Hydrolyzes peptide amides.. Its function is as follows. Serine protease which may cleave PFN/profilin. This Plasmodium falciparum (isolate 3D7) protein is Subtilisin-like protease 3.